A 415-amino-acid polypeptide reads, in one-letter code: 6-phospho-beta-glucosidase BglT (415 aa).

1–64 contributes to the NAD(+) binding site; that stretch reads MRIAVIGGGS…DRFKVLISDT (64 aa). 2 residues coordinate substrate: arginine 87 and asparagine 140. Cysteine 162 is a Mn(2+) binding site. Substrate is bound at residue asparagine 163. Histidine 192 lines the Mn(2+) pocket. Tyrosine 241 serves as the catalytic Proton acceptor. Position 261 (arginine 261) interacts with substrate.

The protein belongs to the glycosyl hydrolase 4 family. In terms of assembly, homodimer or homotetramer. Exists in a homodimer/homotetramer equilibrium state in solution. NAD(+) is required as a cofactor. The cofactor is Mn(2+).

The catalysed reaction is 6-phospho-beta-D-glucosyl-(1-&gt;4)-D-glucose + H2O = D-glucose 6-phosphate + D-glucose. In terms of biological role, hydrolyzes cellobiose 6'-phosphate into glucose 6-phosphate (Glc6P) and glucose. The chain is 6-phospho-beta-glucosidase BglT (bglT) from Thermotoga maritima (strain ATCC 43589 / DSM 3109 / JCM 10099 / NBRC 100826 / MSB8).